Consider the following 253-residue polypeptide: Acetylglutamate kinase (253 aa).

Residues 37–38 (GG), Arg-59, and Asn-149 each bind substrate.

Belongs to the acetylglutamate kinase family. ArgB subfamily.

The protein resides in the cytoplasm. The enzyme catalyses N-acetyl-L-glutamate + ATP = N-acetyl-L-glutamyl 5-phosphate + ADP. Its pathway is amino-acid biosynthesis; L-arginine biosynthesis; N(2)-acetyl-L-ornithine from L-glutamate: step 2/4. Its function is as follows. Catalyzes the ATP-dependent phosphorylation of N-acetyl-L-glutamate. This Rubrobacter xylanophilus (strain DSM 9941 / JCM 11954 / NBRC 16129 / PRD-1) protein is Acetylglutamate kinase.